We begin with the raw amino-acid sequence, 161 residues long: Phosphopantetheine adenylyltransferase (161 aa).

It belongs to the eukaryotic CoaD family.

The protein localises to the cytoplasm. The enzyme catalyses (R)-4'-phosphopantetheine + ATP + H(+) = 3'-dephospho-CoA + diphosphate. Its pathway is cofactor biosynthesis; coenzyme A biosynthesis. Reversibly transfers an adenylyl group from ATP to 4'-phosphopantetheine, yielding dephospho-CoA (dPCoA) and pyrophosphate. The chain is Phosphopantetheine adenylyltransferase from Methanosarcina barkeri (strain Fusaro / DSM 804).